A 443-amino-acid chain; its full sequence is Histidine--tRNA ligase (443 aa).

A compositionally biased stretch (basic and acidic residues) spans 1 to 20; the sequence is MTESEKKQQKPQKAKAEKFK. The interval 1-21 is disordered; sequence MTESEKKQQKPQKAKAEKFKA.

It belongs to the class-II aminoacyl-tRNA synthetase family. Homodimer.

It localises to the cytoplasm. The catalysed reaction is tRNA(His) + L-histidine + ATP = L-histidyl-tRNA(His) + AMP + diphosphate + H(+). In Corynebacterium jeikeium (strain K411), this protein is Histidine--tRNA ligase.